The primary structure comprises 277 residues: Large ribosomal subunit protein uL2 (277 aa).

Residues 222 to 259 (GSVMNPNDHPHGGGEGKSPVGRPSPVTPWGKPALGYKT) are disordered.

Belongs to the universal ribosomal protein uL2 family. As to quaternary structure, part of the 50S ribosomal subunit. Forms a bridge to the 30S subunit in the 70S ribosome.

Its function is as follows. One of the primary rRNA binding proteins. Required for association of the 30S and 50S subunits to form the 70S ribosome, for tRNA binding and peptide bond formation. It has been suggested to have peptidyltransferase activity; this is somewhat controversial. Makes several contacts with the 16S rRNA in the 70S ribosome. This chain is Large ribosomal subunit protein uL2, found in Clostridium beijerinckii (strain ATCC 51743 / NCIMB 8052) (Clostridium acetobutylicum).